We begin with the raw amino-acid sequence, 344 residues long: Protease HtpX homolog (344 aa).

Helical transmembrane passes span 8–28 (VALGLYMLGYLFMFVIAATVA), 46–66 (ALTGVMIVLTTAFVIYLFVLV), and 74–94 (VSFLVGLIAFVVLMNLLTYVA). His172 lines the Zn(2+) pocket. Glu173 is a catalytic residue. His176 contacts Zn(2+). Transmembrane regions (helical) follow at residues 183-203 (AIMLLFGVLPSVVYYLGVTAV) and 220-240 (LAVGVVAVLASFLIQLLVLAF). Residue Glu245 coordinates Zn(2+).

This sequence belongs to the peptidase M48B family. Zn(2+) serves as cofactor.

Its subcellular location is the cell membrane. The polypeptide is Protease HtpX homolog (Pyrobaculum calidifontis (strain DSM 21063 / JCM 11548 / VA1)).